Reading from the N-terminus, the 149-residue chain is UPF0756 membrane protein MS1439 (149 aa).

4 consecutive transmembrane segments (helical) span residues 10-32 (IMLVVLILLGVLSNNNSITISAL), 56-76 (VGIIILTVGVLAPLVSGKVQL), 82-102 (FLNWQMFLSIVIGIAVAWFAG), and 126-146 (VAFLGGIPVGPLIAAGILAVI).

The protein belongs to the UPF0756 family.

It is found in the cell membrane. In Mannheimia succiniciproducens (strain KCTC 0769BP / MBEL55E), this protein is UPF0756 membrane protein MS1439.